The chain runs to 335 residues: Nucleoid-associated protein YejK (335 aa).

Belongs to the YejK family.

It is found in the cytoplasm. The protein localises to the nucleoid. The polypeptide is Nucleoid-associated protein YejK (Salmonella arizonae (strain ATCC BAA-731 / CDC346-86 / RSK2980)).